A 599-amino-acid polypeptide reads, in one-letter code: Dual specificity tyrosine-phosphorylation-regulated kinase 2 (599 aa).

Residues 1–55 (MLTRKPSAAAPAAYPTGRGGDTAVRQLQASPGIGAGAPRSGVGTGPPSPIALPPL) form a disordered region. S30 carries the post-translational modification Phosphoserine. T104 carries the phosphothreonine; by ATM modification. The Nuclear localization signal signature appears at 187-189 (KKR). Residues 220-533 (YEVLKVIGKG…PGQALRHPWL (314 aa)) form the Protein kinase domain. ATP contacts are provided by residues 226 to 234 (IGKGSFGQV), K249, and 299 to 302 (FELL). D346 acts as the Proton acceptor in catalysis. The residue at position 379 (T379) is a Phosphothreonine; by MAP3K10. The residue at position 380 (Y380) is a Phosphotyrosine; by autocatalysis. S440 is subject to Phosphoserine; by ATM. Phosphoserine; by MAP3K10 is present on S447.

The protein belongs to the protein kinase superfamily. CMGC Ser/Thr protein kinase family. MNB/DYRK subfamily. As to quaternary structure, component of an E3 ligase complex containing DYRK2, EDD/UBR5, DDB1 and DCAF1 (EDVP complex). Interacts directly with EDD/UBR5, DDB1 and DCAF1. Interacts with SIAH2 and MDM2. Interacts with MAP3K10 and NFATC1. May also interact with CCNL2. Mg(2+) serves as cofactor. The cofactor is Mn(2+). Autophosphorylates cotranslationally on the second tyrosine residue in the Tyr-X-Tyr motif in the activation loop, but once mature, does not have any protein tyrosine kinase activity. Phosphorylated at Thr-104 and Ser-440 by ATM in response to genotoxic stress. Post-translationally, under normal conditions, polyubiquitinated in the nucleus by MDM2, leading to its proteasomal degradation. Phosphorylation on Thr-104 and Ser-440 by ATM in response to genotoxic stress disrupts MDM2 binding and prevents MDM2-mediated ubiquitination and subsequent proteasomal degradation. Polyubiquitinated by SIAH2, leading to its proteasomal degradation. Polyubiquitinated by SIAH2 occurs under normal conditions, and is enhanced in response to hypoxia.

It localises to the cytoplasm. It is found in the nucleus. The enzyme catalyses L-seryl-[protein] + ATP = O-phospho-L-seryl-[protein] + ADP + H(+). The catalysed reaction is L-threonyl-[protein] + ATP = O-phospho-L-threonyl-[protein] + ADP + H(+). It catalyses the reaction L-tyrosyl-[protein] + ATP = O-phospho-L-tyrosyl-[protein] + ADP + H(+). With respect to regulation, activated by autophosphorylation on the second tyrosine residue in the Tyr-X-Tyr motif in the activation loop. Serine/threonine-protein kinase involved in the regulation of the mitotic cell cycle, cell proliferation, apoptosis, organization of the cytoskeleton and neurite outgrowth. Functions in part via its role in ubiquitin-dependent proteasomal protein degradation. Functions downstream of ATM and phosphorylates p53/TP53 at 'Ser-46', and thereby contributes to the induction of apoptosis in response to DNA damage. Phosphorylates NFATC1, and thereby inhibits its accumulation in the nucleus and its transcription factor activity. Phosphorylates EIF2B5 at 'Ser-544', enabling its subsequent phosphorylation and inhibition by GSK3B. Likewise, phosphorylation of NFATC1, CRMP2/DPYSL2 and CRMP4/DPYSL3 promotes their subsequent phosphorylation by GSK3B. May play a general role in the priming of GSK3 substrates. Inactivates GYS1 by phosphorylation at 'Ser-641', and potentially also a second phosphorylation site, thus regulating glycogen synthesis. Mediates EDVP E3 ligase complex formation and is required for the phosphorylation and subsequent degradation of KATNA1. Phosphorylates TERT at 'Ser-457', promoting TERT ubiquitination by the EDVP complex. Phosphorylates SIAH2, and thereby increases its ubiquitin ligase activity. Promotes the proteasomal degradation of MYC and JUN, and thereby regulates progress through the mitotic cell cycle and cell proliferation. Promotes proteasomal degradation of GLI2 and GLI3, and thereby plays a role in smoothened and sonic hedgehog signaling. Phosphorylates CRMP2/DPYSL2, CRMP4/DPYSL3, DCX, EIF2B5, EIF4EBP1, GLI2, GLI3, GYS1, JUN, MDM2, MYC, NFATC1, p53/TP53, TAU/MAPT and KATNA1. Can phosphorylate histone H1, histone H3 and histone H2B (in vitro). Can phosphorylate CARHSP1 (in vitro). Plays a role in cytoskeleton organization and neurite outgrowth via its phosphorylation of DCX. This Mus musculus (Mouse) protein is Dual specificity tyrosine-phosphorylation-regulated kinase 2.